A 110-amino-acid chain; its full sequence is Early nodulin-12A (110 aa).

Residues 1–24 (MASFFLSSLVLFLAALILVPQGLA) form the signal peptide. A disordered region spans residues 31-110 (VYEPPVNGPP…HPTEEHNIHF (80 aa)). Residues 32 to 43 (YEPPVNGPPVNK) are compositionally biased toward pro residues. Tandem repeats lie at residues 34 to 38 (PPVNG), 39 to 43 (PPVNK), and 44 to 48 (PPQKE). The interval 34-88 (PPVNGPPVNKPPQKETPVHKPPQKETPVHKPPQKEPPRHKPPQKEPPRHKPPHKK) is 11 X 5 AA approximate tandem repeats of P-P-[VQRH]-[NKH]-[GKE]. The segment covering 45 to 81 (PQKETPVHKPPQKETPVHKPPQKEPPRHKPPQKEPPR) has biased composition (basic and acidic residues). The stretch at 49–53 (TPVHK) is one 4; approximate repeat. The stretch at 54–58 (PPQKE) is repeat 5. A 6; approximate repeat occupies 59-63 (TPVHK). 5 tandem repeats follow at residues 64-68 (PPQKE), 69-73 (PPRHK), 74-78 (PPQKE), 79-83 (PPRHK), and 84-88 (PPHKK). A compositionally biased stretch (basic residues) spans 82–93 (HKPPHKKSHLHV). A compositionally biased stretch (basic and acidic residues) spans 101-110 (HPTEEHNIHF).

This sequence belongs to the plant proline-rich protein superfamily. ENOD12 family. As to expression, root nodules, stem and flower.

The protein localises to the secreted. The protein resides in the cell wall. In terms of biological role, involved in the infection process during the plant-rhizobium interaction. The polypeptide is Early nodulin-12A (ENOD12A) (Pisum sativum (Garden pea)).